A 361-amino-acid chain; its full sequence is tRNA(Ile)-lysidine synthase (361 aa).

32–37 (SGGPDS) is a binding site for ATP.

Belongs to the tRNA(Ile)-lysidine synthase family.

Its subcellular location is the cytoplasm. The catalysed reaction is cytidine(34) in tRNA(Ile2) + L-lysine + ATP = lysidine(34) in tRNA(Ile2) + AMP + diphosphate + H(+). Its function is as follows. Ligates lysine onto the cytidine present at position 34 of the AUA codon-specific tRNA(Ile) that contains the anticodon CAU, in an ATP-dependent manner. Cytidine is converted to lysidine, thus changing the amino acid specificity of the tRNA from methionine to isoleucine. The protein is tRNA(Ile)-lysidine synthase of Bradyrhizobium diazoefficiens (strain JCM 10833 / BCRC 13528 / IAM 13628 / NBRC 14792 / USDA 110).